The primary structure comprises 198 residues: LIM domain-containing protein D (198 aa).

The region spanning 5-65 (GKCTRCQKTV…ANHYPVGGLS (61 aa)) is the LIM zinc-binding domain.

The protein localises to the cell projection. Its subcellular location is the pseudopodium. It localises to the cytoplasm. It is found in the cell cortex. The protein resides in the cytoskeleton. In terms of biological role, binds to F-actin and may modulate the chemotactic response during early development and contribute to the maintenance of the strength of the actin cytoskeleton. This Dictyostelium discoideum (Social amoeba) protein is LIM domain-containing protein D (limD).